Here is a 562-residue protein sequence, read N- to C-terminus: Valerena-4,7(11)-diene synthase (562 aa).

3 residues coordinate Mg(2+): D314, D318, and E467. The DDXXD motif motif lies at 314–318 (DDTYD).

It belongs to the terpene synthase family. The cofactor is Mg(2+). As to expression, predominantly expressed in root.

It catalyses the reaction (2E,6E)-farnesyl diphosphate = valerena-4,7(11)-diene + diphosphate. In terms of biological role, catalyzes formation of valerena-4,7(11)-diene, one of the active ingredients responsible for the sedative effect extracted from Valeriana officinalis root. The sequence is that of Valerena-4,7(11)-diene synthase (TPS2) from Valeriana officinalis (Valerian).